Here is a 195-residue protein sequence, read N- to C-terminus: Probable GTP-binding protein EngB (195 aa).

In terms of domain architecture, EngB-type G spans 22–195; that stretch reads GYPEIALVGR…WKWIEDRMGE (174 aa). GTP is bound by residues 30–37, 57–61, 75–78, 142–145, and 173–176; these read GRSNVGKS, GKTQT, DVPG, TKSD, and MFSA. Residues S37 and T59 each coordinate Mg(2+).

Belongs to the TRAFAC class TrmE-Era-EngA-EngB-Septin-like GTPase superfamily. EngB GTPase family. Mg(2+) is required as a cofactor.

In terms of biological role, necessary for normal cell division and for the maintenance of normal septation. The sequence is that of Probable GTP-binding protein EngB from Pediococcus pentosaceus (strain ATCC 25745 / CCUG 21536 / LMG 10740 / 183-1w).